The primary structure comprises 614 residues: Deoxynucleoside triphosphate triphosphohydrolase SAMHD1 (614 aa).

Over residues 1–13 (MGSPAAGWGAAPA) the composition is skewed to low complexity. The segment at 1–33 (MGSPAAGWGAAPAKRARREGSAESSCGSPADRD) is disordered. The SAM domain maps to 37–102 (WDTERLCQHL…LACLNQLRQT (66 aa)). GTP-binding residues include K107 and V108. N110 contributes to the dGTP binding site. Residues D128, Q133, and R136 each contribute to the GTP site. Residues Q140, L141, V147, and R155 each coordinate dGTP. Residue Q140 coordinates dATP. Q140 lines the dCTP pocket. Q140 is a dTTP binding site. R155 provides a ligand contact to dATP. A dCTP-binding site is contributed by R155. R155 serves as a coordination point for dTTP. Positions 155-307 (RFEHSLGVGY…GIDVDKWDYF (153 aa)) constitute an HD domain. Mn(2+)-binding residues include H158, H197, and D198. DATP is bound by residues H201 and H206. H201 and H206 together coordinate dCTP. DTTP-binding residues include H201 and H206. H224 is an active-site residue. Mn(2+) is bound at residue D302. DGTP is bound by residues K303, Y306, D310, R324, R343, K345, N349, R357, Y365, Q366, H367, and K368. The dATP site is built by K303, Y306, and D310. DCTP-binding residues include K303, Y306, and D310. K303, Y306, and D310 together coordinate dTTP. DATP is bound at residue R357. R357 serves as a coordination point for dCTP. DATP is bound at residue Q366. Q366 lines the dCTP pocket. Q366 contacts dTTP. GTP contacts are provided by R442, K446, and K515. Residue K515 coordinates dGTP.

It belongs to the SAMHD1 family. In terms of assembly, homodimer; in absence of GTP and dNTP. Homotetramer; in GTP- and dNTP-bound form. Interacts with rbbp8/CtIP. It depends on Zn(2+) as a cofactor.

It localises to the nucleus. The protein resides in the chromosome. It catalyses the reaction a 2'-deoxyribonucleoside 5'-triphosphate + H2O = a 2'-deoxyribonucleoside + triphosphate + H(+). The enzyme catalyses dATP + H2O = 2'-deoxyadenosine + triphosphate + H(+). It carries out the reaction dCTP + H2O = 2'-deoxycytidine + triphosphate + H(+). The catalysed reaction is dGTP + H2O = 2'-deoxyguanosine + triphosphate + H(+). It catalyses the reaction dTTP + H2O = thymidine + triphosphate + H(+). With respect to regulation, allosterically activated and regulated via the combined actions of GTP and dNTPs (dATP, dGTP, dTTP and dCTP): Allosteric site 1 binds GTP, while allosteric site 2 binds dNTP. Allosteric activation promotes the formation of highly active homotetramers. In terms of biological role, protein that acts both as a host restriction factor involved in defense response to virus and as a regulator of DNA end resection at stalled replication forks. Has deoxynucleoside triphosphate (dNTPase) activity, which is required to restrict infection by viruses: dNTPase activity reduces cellular dNTP levels to levels too low for retroviral reverse transcription to occur, blocking early-stage virus replication in dendritic and other myeloid cells. Functions during S phase at stalled DNA replication forks to promote the resection of gapped or reversed forks: acts by stimulating the exonuclease activity of MRE11, activating the ATR-CHK1 pathway and allowing the forks to restart replication. Its ability to promote degradation of nascent DNA at stalled replication forks is required to prevent induction of type I interferons, thereby preventing chronic inflammation. Ability to promote DNA end resection at stalled replication forks is independent of dNTPase activity. The sequence is that of Deoxynucleoside triphosphate triphosphohydrolase SAMHD1 from Gallus gallus (Chicken).